The sequence spans 165 residues: Protein SprT (165 aa).

The SprT-like domain maps to 20-162; that stretch reads EKLAQANLKL…YRCVHCGEQL (143 aa). His78 is a binding site for Zn(2+). Residue Glu79 is part of the active site. Residue His82 participates in Zn(2+) binding.

This sequence belongs to the SprT family. It depends on Zn(2+) as a cofactor.

Its subcellular location is the cytoplasm. In Escherichia coli (strain SMS-3-5 / SECEC), this protein is Protein SprT.